The following is a 252-amino-acid chain: Chitooligosaccharide deacetylase (252 aa).

2 residues coordinate Mg(2+): His61 and His125.

The protein belongs to the YdjC deacetylase family. ChbG subfamily. Homodimer. The cofactor is Mg(2+).

Its subcellular location is the cytoplasm. The enzyme catalyses N,N'-diacetylchitobiose + H2O = N-acetyl-beta-D-glucosaminyl-(1-&gt;4)-D-glucosamine + acetate. It carries out the reaction diacetylchitobiose-6'-phosphate + H2O = N'-monoacetylchitobiose-6'-phosphate + acetate. It participates in glycan degradation; chitin degradation. Its function is as follows. Involved in the degradation of chitin. ChbG is essential for growth on the acetylated chitooligosaccharides chitobiose and chitotriose but is dispensable for growth on cellobiose and chitosan dimer, the deacetylated form of chitobiose. Deacetylation of chitobiose-6-P and chitotriose-6-P is necessary for both the activation of the chb promoter by the regulatory protein ChbR and the hydrolysis of phosphorylated beta-glucosides by the phospho-beta-glucosidase ChbF. Catalyzes the removal of only one acetyl group from chitobiose-6-P to yield monoacetylchitobiose-6-P, the inducer of ChbR and the substrate of ChbF. This chain is Chitooligosaccharide deacetylase, found in Escherichia coli O8 (strain IAI1).